Consider the following 726-residue polypeptide: Probable pre-mRNA-splicing factor ATP-dependent RNA helicase DEAH2 (726 aa).

A Helicase ATP-binding domain is found at 71 to 240 (LKTLNNNQTL…FSGAPLMKVP (170 aa)). 84–91 (GETGSGKT) is a binding site for ATP. The short motif at 187–190 (DEAH) is the DEAH box element. The 181-residue stretch at 265 to 445 (TVVQIHMCEP…NTVLTLKKLG (181 aa)) folds into the Helicase C-terminal domain.

Belongs to the DEAD box helicase family. DEAH subfamily. PRP43 sub-subfamily.

The catalysed reaction is ATP + H2O = ADP + phosphate + H(+). Its function is as follows. May be involved in pre-mRNA splicing. This Arabidopsis thaliana (Mouse-ear cress) protein is Probable pre-mRNA-splicing factor ATP-dependent RNA helicase DEAH2.